A 250-amino-acid polypeptide reads, in one-letter code: Phosphoribosylaminoimidazole-succinocarboxamide synthase (250 aa).

The protein belongs to the SAICAR synthetase family.

It carries out the reaction 5-amino-1-(5-phospho-D-ribosyl)imidazole-4-carboxylate + L-aspartate + ATP = (2S)-2-[5-amino-1-(5-phospho-beta-D-ribosyl)imidazole-4-carboxamido]succinate + ADP + phosphate + 2 H(+). Its pathway is purine metabolism; IMP biosynthesis via de novo pathway; 5-amino-1-(5-phospho-D-ribosyl)imidazole-4-carboxamide from 5-amino-1-(5-phospho-D-ribosyl)imidazole-4-carboxylate: step 1/2. The polypeptide is Phosphoribosylaminoimidazole-succinocarboxamide synthase (Bifidobacterium longum (strain DJO10A)).